A 160-amino-acid chain; its full sequence is Ribosomal RNA large subunit methyltransferase H (160 aa).

S-adenosyl-L-methionine-binding positions include leucine 76, glycine 108, and 127-132 (LGKLTW).

It belongs to the RNA methyltransferase RlmH family. In terms of assembly, homodimer.

It localises to the cytoplasm. The enzyme catalyses pseudouridine(1915) in 23S rRNA + S-adenosyl-L-methionine = N(3)-methylpseudouridine(1915) in 23S rRNA + S-adenosyl-L-homocysteine + H(+). In terms of biological role, specifically methylates the pseudouridine at position 1915 (m3Psi1915) in 23S rRNA. The sequence is that of Ribosomal RNA large subunit methyltransferase H from Agrobacterium fabrum (strain C58 / ATCC 33970) (Agrobacterium tumefaciens (strain C58)).